Here is a 376-residue protein sequence, read N- to C-terminus: Lipid-A-disaccharide synthase (376 aa).

This sequence belongs to the LpxB family.

The catalysed reaction is a lipid X + a UDP-2-N,3-O-bis[(3R)-3-hydroxyacyl]-alpha-D-glucosamine = a lipid A disaccharide + UDP + H(+). It functions in the pathway bacterial outer membrane biogenesis; LPS lipid A biosynthesis. Its function is as follows. Condensation of UDP-2,3-diacylglucosamine and 2,3-diacylglucosamine-1-phosphate to form lipid A disaccharide, a precursor of lipid A, a phosphorylated glycolipid that anchors the lipopolysaccharide to the outer membrane of the cell. The chain is Lipid-A-disaccharide synthase from Coxiella burnetii (strain RSA 331 / Henzerling II).